The sequence spans 355 residues: Ataxin-3 (355 aa).

Met-1 is covalently cross-linked (Peptide (Met-Gly) (interchain with G-Cter in ubiquitin)). In terms of domain architecture, Josephin spans 1 to 180 (MESIFHEKQE…DCEADQLLQM (180 aa)). Residue Cys-14 is the Nucleophile of the active site. The active-site Proton acceptor is the His-119. Asn-134 is an active-site residue. Residue Lys-200 forms a Glycyl lysine isopeptide (Lys-Gly) (interchain with G-Cter in ubiquitin) linkage. UIM domains are found at residues 224–243 (DDED…IDME) and 244–263 (DEEA…SSRG). The interval 257-333 (MQGSSRGMCE…AGNAMSEEDV (77 aa)) is disordered. Phosphoserine is present on residues Ser-268, Ser-272, and Ser-273. Basic and acidic residues predominate over residues 279–301 (EELRKRREAYFEKQQHQQQEADR). The segment covering 312–326 (PTTSSGGLRSNQAGN) has biased composition (polar residues). Ser-321 bears the Phosphoserine mark. The UIM 3 domain maps to 329–348 (SEEDVLRATVTVSLETAKDS).

In terms of assembly, interacts with STUB1/CHIP (when monoubiquitinated). Interacts with DNA repair proteins RAD23A and RAD23B. Interacts with BECN1 (via its poly-Gln domain). Interacts with PRKN, UBR2, VCP and tubulin. In terms of processing, monoubiquitinated by UBE2W, possibly leading to activate the deubiquitinating enzyme activity. In terms of tissue distribution, ubiquitously expressed.

The protein localises to the nucleus matrix. It is found in the nucleus. The protein resides in the lysosome membrane. The enzyme catalyses Thiol-dependent hydrolysis of ester, thioester, amide, peptide and isopeptide bonds formed by the C-terminal Gly of ubiquitin (a 76-residue protein attached to proteins as an intracellular targeting signal).. In terms of biological role, deubiquitinating enzyme involved in protein homeostasis maintenance, transcription, cytoskeleton regulation, myogenesis and degradation of misfolded chaperone substrates. Binds long polyubiquitin chains and trims them, while it has weak or no activity against chains of 4 or less ubiquitins. Involved in degradation of misfolded chaperone substrates via its interaction with STUB1/CHIP: recruited to monoubiquitinated STUB1/CHIP, and restricts the length of ubiquitin chain attached to STUB1/CHIP substrates and preventing further chain extension. Interacts with key regulators of transcription and represses transcription: acts as a histone-binding protein that regulates transcription. Acts as a negative regulator of mTORC1 signaling in response to amino acid deprivation by mediating deubiquitination of RHEB, thereby promoting RHEB inactivation by the TSC-TBC complex. Regulates autophagy via the deubiquitination of 'Lys-402' of BECN1 leading to the stabilization of BECN1. This Rattus norvegicus (Rat) protein is Ataxin-3 (Atxn3).